Reading from the N-terminus, the 508-residue chain is Photosystem II CP47 reaction center protein (508 aa).

6 helical membrane-spanning segments follow: residues 21-36 (SVHI…WAGS), 101-115 (IVFS…IWHW), 140-156 (GIHL…FGAF), 203-218 (IAAG…FHLS), 237-252 (VLSS…AFVV), and 457-472 (SFAL…HGAR).

Belongs to the PsbB/PsbC family. PsbB subfamily. As to quaternary structure, PSII is composed of 1 copy each of membrane proteins PsbA, PsbB, PsbC, PsbD, PsbE, PsbF, PsbH, PsbI, PsbJ, PsbK, PsbL, PsbM, PsbT, PsbX, PsbY, PsbZ, Psb30/Ycf12, at least 3 peripheral proteins of the oxygen-evolving complex and a large number of cofactors. It forms dimeric complexes. The cofactor is Binds multiple chlorophylls. PSII binds additional chlorophylls, carotenoids and specific lipids..

The protein resides in the plastid. It is found in the chloroplast thylakoid membrane. Its function is as follows. One of the components of the core complex of photosystem II (PSII). It binds chlorophyll and helps catalyze the primary light-induced photochemical processes of PSII. PSII is a light-driven water:plastoquinone oxidoreductase, using light energy to abstract electrons from H(2)O, generating O(2) and a proton gradient subsequently used for ATP formation. This Aethionema grandiflorum (Persian stone-cress) protein is Photosystem II CP47 reaction center protein.